The primary structure comprises 220 residues: Probable pterin-4-alpha-carbinolamine dehydratase, chloroplastic (220 aa).

Residues 1–50 (MAATSSSPPCNISASSLLLRQPSRSILKVFGLLPPVSRNNRKLGRLTVTR) constitute a chloroplast transit peptide.

This sequence belongs to the pterin-4-alpha-carbinolamine dehydratase family. In terms of assembly, interacts with SDIR1. Interacts with AIRP2. Post-translationally, ubiquitinated by SDIR1. Ubiquitination leads to its subsequent degradation, thus controlling abscisic acid (ABA) signaling. Ubiquitinated by AIRP2. Ubiquitination leads to its subsequent degradation, thus controlling abscisic acid (ABA) signaling during drought stress.

It localises to the plastid. The protein localises to the chloroplast. Its subcellular location is the cell membrane. It is found in the nucleus. The enzyme catalyses (4aS,6R)-4a-hydroxy-L-erythro-5,6,7,8-tetrahydrobiopterin = (6R)-L-erythro-6,7-dihydrobiopterin + H2O. Involved in tetrahydrobiopterin biosynthesis. Interacts with and acts downstream of the E3 ubiquitin-protein ligase SDIR1 in abscisic acid (ABA) and salt stress signaling. Regulates the expression of the bZIP transcription factor ABI5, which mediates responses to ABA during seed germination and salt stress. The SDIR1-ATP1/SDIRIP1 complex plays an important role in ABA signaling through the ubiquitination pathway. Acts downstream of AIRP2 in regulation of ABA signaling during drought stress. In Arabidopsis thaliana (Mouse-ear cress), this protein is Probable pterin-4-alpha-carbinolamine dehydratase, chloroplastic.